Here is a 333-residue protein sequence, read N- to C-terminus: Ketol-acid reductoisomerase (NADP(+)) (333 aa).

In terms of domain architecture, KARI N-terminal Rossmann spans 2 to 182 (AKIYYDEDAS…GATRAGVIET (181 aa)). Residues 25 to 28 (YGSQ), S51, S53, and 83 to 86 (DTVQ) each bind NADP(+). The active site involves H108. G134 serves as a coordination point for NADP(+). Residues 183–327 (TFKEETETDL…EELRKMMPWL (145 aa)) form the KARI C-terminal knotted domain. The Mg(2+) site is built by D191, E195, E227, and E231. A substrate-binding site is contributed by S252.

This sequence belongs to the ketol-acid reductoisomerase family. The cofactor is Mg(2+).

It carries out the reaction (2R)-2,3-dihydroxy-3-methylbutanoate + NADP(+) = (2S)-2-acetolactate + NADPH + H(+). The enzyme catalyses (2R,3R)-2,3-dihydroxy-3-methylpentanoate + NADP(+) = (S)-2-ethyl-2-hydroxy-3-oxobutanoate + NADPH + H(+). It participates in amino-acid biosynthesis; L-isoleucine biosynthesis; L-isoleucine from 2-oxobutanoate: step 2/4. It functions in the pathway amino-acid biosynthesis; L-valine biosynthesis; L-valine from pyruvate: step 2/4. Its function is as follows. Involved in the biosynthesis of branched-chain amino acids (BCAA). Catalyzes an alkyl-migration followed by a ketol-acid reduction of (S)-2-acetolactate (S2AL) to yield (R)-2,3-dihydroxy-isovalerate. In the isomerase reaction, S2AL is rearranged via a Mg-dependent methyl migration to produce 3-hydroxy-3-methyl-2-ketobutyrate (HMKB). In the reductase reaction, this 2-ketoacid undergoes a metal-dependent reduction by NADPH to yield (R)-2,3-dihydroxy-isovalerate. In Aquifex aeolicus (strain VF5), this protein is Ketol-acid reductoisomerase (NADP(+)).